The chain runs to 116 residues: Dynein light chain Tctex-type 3 (116 aa).

Tyr4 bears the 3'-nitrotyrosine mark.

It belongs to the dynein light chain Tctex-type family. As to quaternary structure, homodimer. The cytoplasmic dynein 1 complex consists of two catalytic heavy chains (HCs) and a number of non-catalytic subunits presented by intermediate chains (ICs), light intermediate chains (LICs) and light chains (LCs); the composition seems to vary in respect to the IC, LIC and LC composition. The heavy chain homodimer serves as a scaffold for the probable homodimeric assembly of the respective non-catalytic subunits. The ICs and LICs bind directly to the HC dimer and the LCs assemble on the IC dimer. DYNLT1 and DYNLT3 compete for association with dynein IC (DYNC1I1 or DYNC1I2). Self-associates. Interacts with DYNC1I1 and DYNC1I2. Interacts with BUB3. Interacts with SATB1 in nucleus to form complex with matrix attachment regions (MARs) of DNA.

The protein resides in the nucleus. Its subcellular location is the cytoplasm. It localises to the cytoskeleton. It is found in the chromosome. The protein localises to the centromere. The protein resides in the kinetochore. Functionally, acts as one of several non-catalytic accessory components of the cytoplasmic dynein 1 complex that are thought to be involved in linking dynein to cargos and to adapter proteins that regulate dynein function. Cytoplasmic dynein 1 acts as a motor for the intracellular retrograde motility of vesicles and organelles along microtubules. Probably binds BUB3 as part of transport cargo. Required for the efficient progression through mitosis. The protein is Dynein light chain Tctex-type 3 (DYNLT3) of Homo sapiens (Human).